A 250-amino-acid polypeptide reads, in one-letter code: 2,3-bisphosphoglycerate-dependent phosphoglycerate mutase (250 aa).

Residues Arg-10–Asn-17, Thr-23–Gly-24, Arg-62, Glu-89–Tyr-92, Lys-100, Arg-116–Arg-117, and Gly-185–Asn-186 contribute to the substrate site. The active-site Tele-phosphohistidine intermediate is His-11. The Proton donor/acceptor role is filled by Glu-89.

This sequence belongs to the phosphoglycerate mutase family. BPG-dependent PGAM subfamily. As to quaternary structure, homodimer.

The catalysed reaction is (2R)-2-phosphoglycerate = (2R)-3-phosphoglycerate. It functions in the pathway carbohydrate degradation; glycolysis; pyruvate from D-glyceraldehyde 3-phosphate: step 3/5. Functionally, catalyzes the interconversion of 2-phosphoglycerate and 3-phosphoglycerate. The sequence is that of 2,3-bisphosphoglycerate-dependent phosphoglycerate mutase from Pectobacterium carotovorum subsp. carotovorum (strain PC1).